A 910-amino-acid chain; its full sequence is Protein translocase subunit SecA (910 aa).

Residues Q87, G105 to T109, and D508 each bind ATP. Residues R848–S910 are disordered. Over residues A869–Q880 the composition is skewed to low complexity. 4 residues coordinate Zn(2+): C894, C896, C905, and H906. Over residues K900 to S910 the composition is skewed to basic residues.

The protein belongs to the SecA family. In terms of assembly, monomer and homodimer. Part of the essential Sec protein translocation apparatus which comprises SecA, SecYEG and auxiliary proteins SecDF-YajC and YidC. Zn(2+) serves as cofactor.

Its subcellular location is the cell inner membrane. It localises to the cytoplasm. The enzyme catalyses ATP + H2O + cellular proteinSide 1 = ADP + phosphate + cellular proteinSide 2.. Its function is as follows. Part of the Sec protein translocase complex. Interacts with the SecYEG preprotein conducting channel. Has a central role in coupling the hydrolysis of ATP to the transfer of proteins into and across the cell membrane, serving both as a receptor for the preprotein-SecB complex and as an ATP-driven molecular motor driving the stepwise translocation of polypeptide chains across the membrane. This is Protein translocase subunit SecA from Stenotrophomonas maltophilia (strain K279a).